Here is a 424-residue protein sequence, read N- to C-terminus: Serine--tRNA ligase (424 aa).

229–231 (TAE) serves as a coordination point for L-serine. Residue 260-262 (RSE) coordinates ATP. Glu-283 lines the L-serine pocket. Residue 347–350 (EISS) coordinates ATP. Ser-383 lines the L-serine pocket.

It belongs to the class-II aminoacyl-tRNA synthetase family. Type-1 seryl-tRNA synthetase subfamily. Homodimer. The tRNA molecule binds across the dimer.

It localises to the cytoplasm. It catalyses the reaction tRNA(Ser) + L-serine + ATP = L-seryl-tRNA(Ser) + AMP + diphosphate + H(+). The catalysed reaction is tRNA(Sec) + L-serine + ATP = L-seryl-tRNA(Sec) + AMP + diphosphate + H(+). It participates in aminoacyl-tRNA biosynthesis; selenocysteinyl-tRNA(Sec) biosynthesis; L-seryl-tRNA(Sec) from L-serine and tRNA(Sec): step 1/1. Its function is as follows. Catalyzes the attachment of serine to tRNA(Ser). Is also able to aminoacylate tRNA(Sec) with serine, to form the misacylated tRNA L-seryl-tRNA(Sec), which will be further converted into selenocysteinyl-tRNA(Sec). The polypeptide is Serine--tRNA ligase (Gluconacetobacter diazotrophicus (strain ATCC 49037 / DSM 5601 / CCUG 37298 / CIP 103539 / LMG 7603 / PAl5)).